Here is a 279-residue protein sequence, read N- to C-terminus: Small ribosomal subunit protein uS2 (279 aa).

The tract at residues 232–260 (KVDMEAAGENAPKGAGKKKNTKARMDKAE) is disordered.

It belongs to the universal ribosomal protein uS2 family.

The polypeptide is Small ribosomal subunit protein uS2 (Phocaeicola vulgatus (strain ATCC 8482 / DSM 1447 / JCM 5826 / CCUG 4940 / NBRC 14291 / NCTC 11154) (Bacteroides vulgatus)).